We begin with the raw amino-acid sequence, 128 residues long: Tachykinin-4 (128 aa).

The signal sequence occupies residues 1 to 16; the sequence is MLPLLALLLLIGPSVC. A propeptide spanning residues 17–54 is cleaved from the precursor; it reads TTAGDREELAFGAEAESWVTVNLKGIPVPSIELKLQEL. Methionine amide is present on Met66. The propeptide occupies 69-128; the sequence is RVGGYQLGRIVQDLLGTRGLSIEGTCRQAASQQRARPGAVTRESLQSREEDEAPLTTSNV. Residues 96-128 form a disordered region; sequence QAASQQRARPGAVTRESLQSREEDEAPLTTSNV.

This sequence belongs to the tachykinin family. In terms of tissue distribution, expressed in hematopoietic cells with highest levels in pre- and pro-B cells but not in later developmental stages. Also detected in uterus, skeletal muscle, brain, spleen, stomach, skin and lactating mammary gland and in cells of myeloid lineage including dendritic and microglial cells and macrophages. In uterus, highest expression is observed in non-pregnant diestrus mice and in day 5 pregnant mice. Compared with mice in diestrus, decreases 2.6-fold in uteri from non-pregnant mice in estrus and 10.2-fold in day 17 pregnant mice. Detected at sites of chronic inflammation such as granulomas.

Its subcellular location is the secreted. Functionally, tachykinins are active peptides which excite neurons, evoke behavioral responses, are potent vasodilators and secretagogues, and contract (directly or indirectly) many smooth muscles. Hemokinin induces plasma extravasation, mast cell degranulation, muscle contraction, salivary secretion and scratching behavior. Increases sperm motility. Induces potent analgesic effects and may play a role in pain modulation. Promotes survival of bone marrow B lineage cells and of cultured LPS-stimulated pre-B cells and may act as an autocrine factor required for B-cell survival and proliferation. Lowers systemic arterial pressure following intravenous injection. Induces interferon-gamma production and may play a role in the inflammatory response. Shows potent affinity and specificity for the NK-1 receptor. This is Tachykinin-4 from Mus musculus (Mouse).